Reading from the N-terminus, the 255-residue chain is S-adenosyl-L-methionine-dependent uroporphyrinogen III methyltransferase (255 aa).

Residues Pro-15, 91–93 (GGD), 121–122 (TS), Met-175, and Ala-232 contribute to the S-adenosyl-L-homocysteine site.

Belongs to the precorrin methyltransferase family. Homodimer.

It catalyses the reaction uroporphyrinogen III + 2 S-adenosyl-L-methionine = precorrin-2 + 2 S-adenosyl-L-homocysteine + H(+). Its pathway is porphyrin-containing compound metabolism; siroheme biosynthesis; precorrin-2 from uroporphyrinogen III: step 1/1. Its function is as follows. Involved in the archaeal biosynthesis of heme. Catalyzes the methylation of carbons 2 and 7 of uroporphyrinogen-III (UROGEN) to yield precorrin-2. It does not catalyze the overmethylation of precorrin-2 to trimethylpyrrocorphin. In Methanosarcina barkeri (strain Fusaro / DSM 804), this protein is S-adenosyl-L-methionine-dependent uroporphyrinogen III methyltransferase.